A 74-amino-acid polypeptide reads, in one-letter code: U4-theraphotoxin-Cg1a (74 aa).

Positions 1 to 19 (MNATIFALLLLLNLAMHNA) are cleaved as a signal peptide. Residues 20–39 (AEQSSETDMDDTLLIPEINR) constitute a propeptide that is removed on maturation. 3 cysteine pairs are disulfide-bonded: Cys-42–Cys-56, Cys-49–Cys-61, and Cys-55–Cys-71.

The protein belongs to the neurotoxin 36 family. 01 subfamily. As to expression, expressed by the venom gland.

It localises to the secreted. Its function is as follows. Probable ion channel inhibitor. This chain is U4-theraphotoxin-Cg1a, found in Chilobrachys guangxiensis (Chinese earth tiger tarantula).